An 804-amino-acid chain; its full sequence is Phenylalanine--tRNA ligase beta subunit (804 aa).

The tRNA-binding domain maps to Gly39 to Ala147. The 79-residue stretch at Glu402 to Val480 folds into the B5 domain. Mg(2+)-binding residues include Asp458, Asp464, Glu467, and Glu468. The region spanning Ser711 to Arg804 is the FDX-ACB domain.

The protein belongs to the phenylalanyl-tRNA synthetase beta subunit family. Type 1 subfamily. As to quaternary structure, tetramer of two alpha and two beta subunits. Requires Mg(2+) as cofactor.

It localises to the cytoplasm. It catalyses the reaction tRNA(Phe) + L-phenylalanine + ATP = L-phenylalanyl-tRNA(Phe) + AMP + diphosphate + H(+). The polypeptide is Phenylalanine--tRNA ligase beta subunit (Syntrophus aciditrophicus (strain SB)).